The following is a 352-amino-acid chain: Pejvakin (352 aa).

It belongs to the gasdermin family. As to quaternary structure, interacts with MAP1LC3B; interaction is direct. Interacts with IQGAP1. Interacts with ROCK2. Interacts with TRIOBP. In ear, it is detected in the organ of Corti and the spiral ganglion within the cochlea in the sensory areas of the vestibule (cristae ampullares of the semicircular ducts, and maculae of the saccule and utricle) and in the first 3 relays (cochlear nuclei, superior olivary complex and inferior colliculus) of the afferent auditory pathway. Detected in hair cells of the cochlea and vestibule but not in neurons. In the afferent auditory pathway, it is present in the cell bodies of neurons but not in fiber bundles such as the trapezoid body in the brainstem. Also detected in spiral ganglion cells, which form the auditory nerve and project to the cochlear nuclei in the brainstem. Also present in the cochlear nuclei, the superior olive and the inferior colliculus (at protein level). Expressed in all the adult organs tested: brain, eye, inner ear, heart, lung, kidney, liver, intestine, testis and weakly in skeletal muscle.

It is found in the peroxisome membrane. The protein resides in the cell projection. The protein localises to the cilium. Functionally, peroxisome-associated protein required to protect auditory hair cells against noise-induced damage. Acts by regulating noise-induced peroxisome proliferation in auditory hair cells and neurons, and promoting autophagic degradation of damaged peroxisomes (pexophagy). Noise overexposure increases reactive oxygen species (ROS) levels, causing oxidative damage to auditory hair cells and resulting in hearing loss. PJVK acts as a ROS sensor that recruits the autophagy machinery to trigger pexophagy of peroxisomes damaged by oxidative stress. In addition to pexophagy, also required to promote peroxisome proliferation in response to sound overstimulation. The protein is Pejvakin of Mus musculus (Mouse).